A 470-amino-acid polypeptide reads, in one-letter code: Cupincin (470 aa).

The signal sequence occupies residues 1–34 (MAKKKTSSSMARSQLAALLISLCFLSLASNAVGW). Positions 36–52 (RRGEREEEDERRRHGGE) are enriched in basic and acidic residues. 2 disordered regions span residues 36–59 (RRGE…PYHL) and 240–261 (KSCS…PSSL). 2 Cupin type-1 domains span residues 57–215 (YHLG…EELE) and 259–445 (SSLT…AREA). N-linked (GlcNAc...) asparagine glycosylation occurs at N297. Positions 330 to 368 (PHVSGGGSSERREREREHGRRREEEQGEEEHGERGEKAR) are disordered. Positions 338 to 367 (SERREREREHGRRREEEQGEEEHGERGEKA) are enriched in basic and acidic residues. The Zn(2+) site is built by H347, E352, and H360.

The protein belongs to the 7S seed storage protein family. As to quaternary structure, homotrimer. Requires Zn(2+) as cofactor.

The protein localises to the secreted. In terms of biological role, seed storage protein. Globulin-like protein that acts as a zinc metalloprotease. Cleaves specifically between Leu-15 and Tyr-16 of insulin B chain, and Gln-1 and Leu-2 of neurotensin (NT) peptide in vitro. May play a role as an initiating endopeptidase in germinating seeds. This is Cupincin from Oryza sativa subsp. japonica (Rice).